The following is a 132-amino-acid chain: MGRDTIADILTSIRNADMDKKGTVRIASTNMAESVVKILLREGFIENVRKHRENNKYFLVSTLRHRRNRKGTYRNILKRISRPGLRIYSNYQRIPRILGGMGIVILSTSRGIMTDREARLEGIGGEVLCYIW.

The protein belongs to the universal ribosomal protein uS8 family. As to quaternary structure, part of the 30S ribosomal subunit.

The protein resides in the plastid. It is found in the chloroplast. In terms of biological role, one of the primary rRNA binding proteins, it binds directly to 16S rRNA central domain where it helps coordinate assembly of the platform of the 30S subunit. The protein is Small ribosomal subunit protein uS8c (rps8) of Liriodendron tulipifera (Tuliptree).